We begin with the raw amino-acid sequence, 217 residues long: Small ribosomal subunit protein uS3 (217 aa).

Residues 38–106 form the KH type-2 domain; sequence IRNFIKKELA…QVHINIIEIK (69 aa).

Belongs to the universal ribosomal protein uS3 family. Part of the 30S ribosomal subunit. Forms a tight complex with proteins S10 and S14.

Functionally, binds the lower part of the 30S subunit head. Binds mRNA in the 70S ribosome, positioning it for translation. In Streptococcus suis (strain 98HAH33), this protein is Small ribosomal subunit protein uS3.